A 207-amino-acid polypeptide reads, in one-letter code: Ras-related protein Rab-7a (207 aa).

Threonine 2 is subject to N-acetylthreonine. Positions 17, 18, 19, 20, 21, 22, 23, 34, 35, 37, and 40 each coordinate GTP. Threonine 22 lines the Mg(2+) pocket. The Switch 1 signature appears at 28–41 (YVNKKFSNQYKATI). Mg(2+) is bound by residues threonine 40 and aspartate 63. Position 66 (glycine 66) interacts with GTP. Residues 67–82 (QERFQSLGVAFYRGAD) carry the Switch 2 motif. Position 72 is a phosphoserine (serine 72). Positions 125, 126, 128, 156, and 157 each coordinate GTP. Glycyl lysine isopeptide (Lys-Gly) (interchain with G-Cter in ubiquitin) cross-links involve residues lysine 191 and lysine 194. S-geranylgeranyl cysteine attachment occurs at residues cysteine 205 and cysteine 207. The residue at position 207 (cysteine 207) is a Cysteine methyl ester.

The protein belongs to the small GTPase superfamily. Rab family. As to quaternary structure, interacts with NTRK1/TRKA. Interacts with RILP. Interacts with PSMA7. Interacts with RNF115. Interacts with FYCO1. Interacts with the PIK3C3/VPS34-PIK3R4 complex. The GTP-bound form interacts with OSBPL1A. The GTP-bound form interacts with RAC1. Interacts with CLN3. Interacts with CHM, the substrate-binding subunit of the Rab geranylgeranyltransferase complex. Interacts with C9orf72. Does not interact with HPS4 and the BLOC-3 complex (heterodimer of HPS1 and HPS4). Interacts with CLN5. Interacts with PLEKHM1 (via N- and C-terminus). Interacts with PRPH; the interaction is direct. Interacts with VPS13A. The GDP-bound form interacts with RIMOC1. Interacts with the MON1A-CCZ1B complex and this interaction is enhanced in the presence of RIMOC1. Interacts with VPS39 and VPS41. Forms a ternary complex with LAMP2 and RUFY4; the interaction with LAMP2 is mediated by RUFY4 (via RUN and coiled coil domains). Requires Mg(2+) as cofactor. Post-translationally, deubiquitination at Lys-191 and Lys-194 by USP32. In terms of processing, phosphorylated at Ser-72 by LRRK1; phosphorylation is dependent on protein kinase C (PKC) activation of LRRK1. Prenylated. Prenylation is required for association with cellular membranes.

The protein localises to the cytoplasmic vesicle. The protein resides in the phagosome membrane. It is found in the late endosome membrane. Its subcellular location is the lysosome membrane. It localises to the melanosome membrane. The protein localises to the autophagosome membrane. The protein resides in the lipid droplet. It is found in the endosome membrane. Its subcellular location is the mitochondrion membrane. The catalysed reaction is GTP + H2O = GDP + phosphate + H(+). With respect to regulation, regulated by guanine nucleotide exchange factors (GEFs) which promote the exchange of bound GDP for free GTP. Regulated by GTPase activating proteins (GAPs) which increase the GTP hydrolysis activity. Inhibited by GDP dissociation inhibitors (GDIs). Its function is as follows. The small GTPases Rab are key regulators of intracellular membrane trafficking, from the formation of transport vesicles to their fusion with membranes. Rabs cycle between an inactive GDP-bound form and an active GTP-bound form that is able to recruit to membranes different sets of downstream effectors directly responsible for vesicle formation, movement, tethering and fusion. In its active state, RAB7A binds to a variety of effector proteins playing a key role in the regulation of endo-lysosomal trafficking. Governs early-to-late endosomal maturation, microtubule minus-end as well as plus-end directed endosomal migration and positioning, and endosome-lysosome transport through different protein-protein interaction cascades. Also plays a central role in growth-factor-mediated cell signaling, nutrient-transporter-mediated nutrient uptake, neurotrophin transport in the axons of neurons and lipid metabolism. Also involved in regulation of some specialized endosomal membrane trafficking, such as maturation of melanosomes, pathogen-induced phagosomes (or vacuoles) and autophagosomes. Plays a role in the maturation and acidification of phagosomes that engulf pathogens, such as S.aureus and Mycobacteria. Plays a role in the fusion of phagosomes with lysosomes. In concert with RAC1, plays a role in regulating the formation of RBs (ruffled borders) in osteoclasts. Controls the endosomal trafficking and neurite outgrowth signaling of NTRK1/TRKA. Regulates the endocytic trafficking of the EGF-EGFR complex by regulating its lysosomal degradation. Involved in the ADRB2-stimulated lipolysis through lipophagy, a cytosolic lipase-independent autophagic pathway. Required for the exosomal release of SDCBP, CD63 and syndecan. Required for vesicular trafficking and cell surface expression of ACE2. May play a role in PRPH neuronal intermediate filament assembly. This is Ras-related protein Rab-7a (RAB7A) from Pongo abelii (Sumatran orangutan).